Consider the following 426-residue polypeptide: Serine--tRNA ligase (426 aa).

Threonine 231–glutamate 233 contributes to the L-serine binding site. Position 262 to 264 (arginine 262 to glutamate 264) interacts with ATP. An L-serine-binding site is contributed by glutamate 285. Residue glutamate 349–serine 352 coordinates ATP. Serine 385 contacts L-serine.

Belongs to the class-II aminoacyl-tRNA synthetase family. Type-1 seryl-tRNA synthetase subfamily. In terms of assembly, homodimer. The tRNA molecule binds across the dimer.

Its subcellular location is the cytoplasm. It carries out the reaction tRNA(Ser) + L-serine + ATP = L-seryl-tRNA(Ser) + AMP + diphosphate + H(+). The enzyme catalyses tRNA(Sec) + L-serine + ATP = L-seryl-tRNA(Sec) + AMP + diphosphate + H(+). Its pathway is aminoacyl-tRNA biosynthesis; selenocysteinyl-tRNA(Sec) biosynthesis; L-seryl-tRNA(Sec) from L-serine and tRNA(Sec): step 1/1. Functionally, catalyzes the attachment of serine to tRNA(Ser). Is also able to aminoacylate tRNA(Sec) with serine, to form the misacylated tRNA L-seryl-tRNA(Sec), which will be further converted into selenocysteinyl-tRNA(Sec). This chain is Serine--tRNA ligase, found in Saccharophagus degradans (strain 2-40 / ATCC 43961 / DSM 17024).